A 377-amino-acid chain; its full sequence is Nitric oxide reductase FlRd-NAD(+) reductase (377 aa).

The protein belongs to the FAD-dependent oxidoreductase family. FAD serves as cofactor.

It localises to the cytoplasm. The enzyme catalyses 2 reduced [nitric oxide reductase rubredoxin domain] + NAD(+) + H(+) = 2 oxidized [nitric oxide reductase rubredoxin domain] + NADH. It participates in nitrogen metabolism; nitric oxide reduction. Its function is as follows. One of at least two accessory proteins for anaerobic nitric oxide (NO) reductase. Reduces the rubredoxin moiety of NO reductase. The protein is Nitric oxide reductase FlRd-NAD(+) reductase of Salmonella paratyphi B (strain ATCC BAA-1250 / SPB7).